The primary structure comprises 336 residues: Ferrochelatase (336 aa).

2 residues coordinate Fe cation: H206 and E287.

Belongs to the ferrochelatase family.

It localises to the cytoplasm. The enzyme catalyses heme b + 2 H(+) = protoporphyrin IX + Fe(2+). Its pathway is porphyrin-containing compound metabolism; protoheme biosynthesis; protoheme from protoporphyrin-IX: step 1/1. Catalyzes the ferrous insertion into protoporphyrin IX. This Neisseria meningitidis serogroup A / serotype 4A (strain DSM 15465 / Z2491) protein is Ferrochelatase.